An 804-amino-acid chain; its full sequence is Leucine--tRNA ligase (804 aa).

Positions 39–50 match the 'HIGH' region motif; the sequence is PYPSGAGLHVGH. The 'KMSKS' region motif lies at 580–584; sequence KMSKS. Lys-583 serves as a coordination point for ATP.

It belongs to the class-I aminoacyl-tRNA synthetase family.

It is found in the cytoplasm. The enzyme catalyses tRNA(Leu) + L-leucine + ATP = L-leucyl-tRNA(Leu) + AMP + diphosphate. In Mycoplasma capricolum subsp. capricolum (strain California kid / ATCC 27343 / NCTC 10154), this protein is Leucine--tRNA ligase.